The following is a 437-amino-acid chain: Ribosomal protein uS12 methylthiotransferase RimO (437 aa).

The MTTase N-terminal domain occupies 5–116 (PTIAISHLGC…IVEIVERVET (112 aa)). The [4Fe-4S] cluster site is built by Cys-14, Cys-50, Cys-79, Cys-154, Cys-158, and Cys-161. Residues 140 to 369 (TTSEGVAYLR…MLTQQPISER (230 aa)) form the Radical SAM core domain. The TRAM domain maps to 372–437 (QAYIGQTVDV…DTYDLYGEIV (66 aa)).

The protein belongs to the methylthiotransferase family. RimO subfamily. [4Fe-4S] cluster serves as cofactor.

It localises to the cytoplasm. It carries out the reaction L-aspartate(89)-[ribosomal protein uS12]-hydrogen + (sulfur carrier)-SH + AH2 + 2 S-adenosyl-L-methionine = 3-methylsulfanyl-L-aspartate(89)-[ribosomal protein uS12]-hydrogen + (sulfur carrier)-H + 5'-deoxyadenosine + L-methionine + A + S-adenosyl-L-homocysteine + 2 H(+). Catalyzes the methylthiolation of an aspartic acid residue of ribosomal protein uS12. The protein is Ribosomal protein uS12 methylthiotransferase RimO of Microcystis aeruginosa (strain NIES-843 / IAM M-2473).